Here is a 413-residue protein sequence, read N- to C-terminus: Gamma-glutamyl phosphate reductase (413 aa).

The protein belongs to the gamma-glutamyl phosphate reductase family.

The protein resides in the cytoplasm. It carries out the reaction L-glutamate 5-semialdehyde + phosphate + NADP(+) = L-glutamyl 5-phosphate + NADPH + H(+). It participates in amino-acid biosynthesis; L-proline biosynthesis; L-glutamate 5-semialdehyde from L-glutamate: step 2/2. Catalyzes the NADPH-dependent reduction of L-glutamate 5-phosphate into L-glutamate 5-semialdehyde and phosphate. The product spontaneously undergoes cyclization to form 1-pyrroline-5-carboxylate. The sequence is that of Gamma-glutamyl phosphate reductase from Thermus thermophilus (strain ATCC BAA-163 / DSM 7039 / HB27).